The chain runs to 252 residues: Chitooligosaccharide deacetylase (252 aa).

Residues histidine 61 and histidine 125 each coordinate Mg(2+).

This sequence belongs to the YdjC deacetylase family. ChbG subfamily. In terms of assembly, homodimer. Mg(2+) is required as a cofactor.

It localises to the cytoplasm. The enzyme catalyses N,N'-diacetylchitobiose + H2O = N-acetyl-beta-D-glucosaminyl-(1-&gt;4)-D-glucosamine + acetate. It catalyses the reaction diacetylchitobiose-6'-phosphate + H2O = N'-monoacetylchitobiose-6'-phosphate + acetate. It functions in the pathway glycan degradation; chitin degradation. Its function is as follows. Involved in the degradation of chitin. ChbG is essential for growth on the acetylated chitooligosaccharides chitobiose and chitotriose but is dispensable for growth on cellobiose and chitosan dimer, the deacetylated form of chitobiose. Deacetylation of chitobiose-6-P and chitotriose-6-P is necessary for both the activation of the chb promoter by the regulatory protein ChbR and the hydrolysis of phosphorylated beta-glucosides by the phospho-beta-glucosidase ChbF. Catalyzes the removal of only one acetyl group from chitobiose-6-P to yield monoacetylchitobiose-6-P, the inducer of ChbR and the substrate of ChbF. This Salmonella paratyphi C (strain RKS4594) protein is Chitooligosaccharide deacetylase.